A 218-amino-acid polypeptide reads, in one-letter code: ATP-dependent dethiobiotin synthetase BioD (218 aa).

9 to 15 (TNAGKTT) contributes to the ATP binding site. Thr14 serves as a coordination point for Mg(2+). Residue Lys35 is part of the active site. Lys35 lines the phosphate pocket. Thr39 serves as a coordination point for substrate. Residues Asp50, Glu116, and 116–119 (EGAG) contribute to the ATP site. Mg(2+) is bound by residues Asp50 and Glu116. 116–119 (EGAG) serves as a coordination point for phosphate. 151 to 154 (GLIN) is a substrate binding site. ATP contacts are provided by residues Asn175 and 175–177 (NLK).

The protein belongs to the dethiobiotin synthetase family. As to quaternary structure, homodimer. Mg(2+) is required as a cofactor.

Its subcellular location is the cytoplasm. It carries out the reaction (7R,8S)-7,8-diammoniononanoate + CO2 + ATP = (4R,5S)-dethiobiotin + ADP + phosphate + 3 H(+). It participates in cofactor biosynthesis; biotin biosynthesis; biotin from 7,8-diaminononanoate: step 1/2. In terms of biological role, catalyzes a mechanistically unusual reaction, the ATP-dependent insertion of CO2 between the N7 and N8 nitrogen atoms of 7,8-diaminopelargonic acid (DAPA, also called 7,8-diammoniononanoate) to form a ureido ring. The polypeptide is ATP-dependent dethiobiotin synthetase BioD (Helicobacter pylori (strain ATCC 700392 / 26695) (Campylobacter pylori)).